The following is a 420-amino-acid chain: Glucose-1-phosphate adenylyltransferase (420 aa).

Residues tyrosine 107, glycine 172, 187–188 (EK), and serine 205 contribute to the alpha-D-glucose 1-phosphate site.

Belongs to the bacterial/plant glucose-1-phosphate adenylyltransferase family. As to quaternary structure, homotetramer.

The catalysed reaction is alpha-D-glucose 1-phosphate + ATP + H(+) = ADP-alpha-D-glucose + diphosphate. It participates in glycan biosynthesis; glycogen biosynthesis. Functionally, involved in the biosynthesis of ADP-glucose, a building block required for the elongation reactions to produce glycogen. Catalyzes the reaction between ATP and alpha-D-glucose 1-phosphate (G1P) to produce pyrophosphate and ADP-Glc. This is Glucose-1-phosphate adenylyltransferase from Rhizobium leguminosarum bv. trifolii (strain WSM2304).